We begin with the raw amino-acid sequence, 61 residues long: Peroxidase 1 (61 aa).

The interval 1–32 (DNTAKEKDSPANLSLRTCAAGDNAEQPLDPSR) is disordered. Residue Asn12 is glycosylated (N-linked (GlcNAc...) asparagine). The Ca(2+) site is built by Asp29, Ser31, and Asp36.

Belongs to the peroxidase family. Classical plant (class III) peroxidase subfamily. The cofactor is Ca(2+). Heme b serves as cofactor.

It localises to the secreted. The catalysed reaction is 2 a phenolic donor + H2O2 = 2 a phenolic radical donor + 2 H2O. In terms of biological role, removal of H(2)O(2), oxidation of toxic reductants, biosynthesis and degradation of lignin, suberization, auxin catabolism, response to environmental stresses such as wounding, pathogen attack and oxidative stress. These functions might be dependent on each isozyme/isoform in each plant tissue. This is Peroxidase 1 from Vitis rotundifolia (Muscadine grape).